The sequence spans 288 residues: 33 kDa chaperonin (288 aa).

Cystine bridges form between C235/C237 and C268/C271.

This sequence belongs to the HSP33 family. Under oxidizing conditions two disulfide bonds are formed involving the reactive cysteines. Under reducing conditions zinc is bound to the reactive cysteines and the protein is inactive.

The protein resides in the cytoplasm. Functionally, redox regulated molecular chaperone. Protects both thermally unfolding and oxidatively damaged proteins from irreversible aggregation. Plays an important role in the bacterial defense system toward oxidative stress. The polypeptide is 33 kDa chaperonin (Streptococcus thermophilus (strain ATCC BAA-491 / LMD-9)).